A 651-amino-acid polypeptide reads, in one-letter code: Beta-glucuronidase (651 aa).

The N-terminal stretch at 1–22 (MLRGPAAVWAALGPLLWACGLA) is a signal peptide. 2 N-linked (GlcNAc...) asparagine glycosylation sites follow: Asn172 and Asn419. The active-site Proton donor is Glu450. The N-linked (GlcNAc...) asparagine glycan is linked to Asn630.

It belongs to the glycosyl hydrolase 2 family. Homotetramer.

It is found in the lysosome. The catalysed reaction is a beta-D-glucuronoside + H2O = D-glucuronate + an alcohol. Its activity is regulated as follows. Inhibited by L-aspartic acid. In terms of biological role, plays an important role in the degradation of dermatan and keratan sulfates. This chain is Beta-glucuronidase (GUSB), found in Felis catus (Cat).